The chain runs to 213 residues: Uridine kinase (213 aa).

An ATP-binding site is contributed by 12 to 19; sequence GGSCSGKT.

Belongs to the uridine kinase family.

Its subcellular location is the cytoplasm. The catalysed reaction is uridine + ATP = UMP + ADP + H(+). It carries out the reaction cytidine + ATP = CMP + ADP + H(+). The protein operates within pyrimidine metabolism; CTP biosynthesis via salvage pathway; CTP from cytidine: step 1/3. It functions in the pathway pyrimidine metabolism; UMP biosynthesis via salvage pathway; UMP from uridine: step 1/1. The protein is Uridine kinase (udk) of Mycoplasma genitalium (strain ATCC 33530 / DSM 19775 / NCTC 10195 / G37) (Mycoplasmoides genitalium).